The chain runs to 253 residues: Ribonuclease HII (253 aa).

One can recognise an RNase H type-2 domain in the interval 32–223 (APVAGLDEAG…FKTSGEEDRI (192 aa)). Positions 38, 39, and 130 each coordinate a divalent metal cation.

The protein belongs to the RNase HII family. The cofactor is Mn(2+). Requires Mg(2+) as cofactor.

The protein resides in the cytoplasm. It catalyses the reaction Endonucleolytic cleavage to 5'-phosphomonoester.. Endonuclease that specifically degrades the RNA of RNA-DNA hybrids. In Chelativorans sp. (strain BNC1), this protein is Ribonuclease HII.